We begin with the raw amino-acid sequence, 444 residues long: Platelet-activating factor acetylhydrolase (444 aa).

The signal sequence occupies residues 1–21 (MLPPKLHALFCLCSCLTLVHP). Residues asparagine 60 and asparagine 200 are each glycosylated (N-linked (GlcNAc...) asparagine). Serine 274 serves as the catalytic Nucleophile. Residues aspartate 297 and histidine 352 each act as charge relay system in the active site. The N-linked (GlcNAc...) asparagine glycan is linked to asparagine 424.

The protein belongs to the AB hydrolase superfamily. Lipase family. Post-translationally, N-glycosylated. As to expression, plasma.

The protein resides in the secreted. The protein localises to the extracellular space. The catalysed reaction is a 1-O-alkyl-2-acetyl-sn-glycero-3-phosphocholine + H2O = a 1-O-alkyl-sn-glycero-3-phosphocholine + acetate + H(+). It catalyses the reaction 1-O-decyl-2-acetyl-sn-glycero-3-phosphocholine + H2O = 1-O-decyl-sn-glycero-3-phosphocholine + acetate + H(+). It carries out the reaction 1-O-dodecyl-2-acetyl-sn-glycero-3-phosphocholine + H2O = 1-O-dodecyl-sn-glycero-3-phosphocholine + acetate + H(+). The enzyme catalyses 1-O-tetradecyl-2-acetyl-sn-glycero-3-phosphocholine + H2O = 1-O-tetradecyl-sn-glycero-3-phosphocholine + acetate + H(+). The catalysed reaction is 1-O-hexadecyl-2-acetyl-sn-glycero-3-phosphocholine + H2O = 1-O-hexadecyl-sn-glycero-3-phosphocholine + acetate + H(+). It catalyses the reaction 1-O-octadecyl-2-acetyl-sn-glycero-3-phosphocholine + H2O = 1-O-octadecyl-sn-glycero-3-phosphocholine + acetate + H(+). It carries out the reaction 1-hexadecanoyl-2-acetyl-sn-glycero-3-phosphocholine + H2O = 1-hexadecanoyl-sn-glycero-3-phosphocholine + acetate + H(+). The enzyme catalyses 1-hexadecanoyl-2-propionyl-sn-glycero-3-phosphocholine + H2O = propanoate + 1-hexadecanoyl-sn-glycero-3-phosphocholine + H(+). The catalysed reaction is 1-hexadecanoyl-2-butanoyl-sn-glycero-3-phosphocholine + H2O = butanoate + 1-hexadecanoyl-sn-glycero-3-phosphocholine + H(+). It catalyses the reaction 1-hexadecanoyl-2-pentanoyl-sn-glycero-3-phosphocholine + H2O = pentanoate + 1-hexadecanoyl-sn-glycero-3-phosphocholine + H(+). It carries out the reaction 1-hexadecanoyl-2-glutaroyl-sn-glycero-3-phosphocholine + H2O = glutarate + 1-hexadecanoyl-sn-glycero-3-phosphocholine + H(+). The enzyme catalyses 1-hexadecanoyl-2-(5-oxopentanoyl)-sn-glycero-3-phosphocholine + H2O = 5-oxopentanoate + 1-hexadecanoyl-sn-glycero-3-phosphocholine + H(+). The catalysed reaction is 1-hexadecanoyl-2-(9-oxononanoyl)-sn-glycero-3-phosphocholine + H2O = 9-oxononanoate + 1-hexadecanoyl-sn-glycero-3-phosphocholine + H(+). It catalyses the reaction 1-hexadecanoyl-2-[9-hydroperoxy-(10E-octadecenoyl)]-sn-glycero-3-phosphocholine + H2O = 9-hydroperoxy-10E-octadecenoate + 1-hexadecanoyl-sn-glycero-3-phosphocholine + H(+). It carries out the reaction 1-hexadecanoyl-2-(10-hydroperoxy-8E-octadecenoyl)-sn-glycero-3-phosphocholine + H2O = 10-hydroperoxy-(8E)-octadecenoate + 1-hexadecanoyl-sn-glycero-3-phosphocholine + H(+). Its function is as follows. Lipoprotein-associated calcium-independent phospholipase A2 involved in phospholipid catabolism during inflammatory and oxidative stress response. At the lipid-aqueous interface, hydrolyzes the ester bond of fatty acyl group attached at sn-2 position of phospholipids (phospholipase A2 activity). Specifically targets phospholipids with a short-chain fatty acyl group at sn-2 position. Can hydrolyze phospholipids with long fatty acyl chains, only if they carry oxidized functional groups. Hydrolyzes and inactivates platelet-activating factor (PAF, 1-O-alkyl-2-acetyl-sn-glycero-3-phosphocholine), a potent pro-inflammatory signaling lipid that acts through PTAFR on various innate immune cells. Hydrolyzes oxidatively truncated phospholipids carrying an aldehyde group at omega position, preventing their accumulation in low-density lipoprotein (LDL) particles and uncontrolled pro-inflammatory effects. As part of high-density lipoprotein (HDL) particles, can hydrolyze phospholipids having long-chain fatty acyl hydroperoxides at sn-2 position and protect against potential accumulation of these oxylipins in the vascular wall. Catalyzes the release from membrane phospholipids of F2-isoprostanes, lipid biomarkers of cellular oxidative damage. This Canis lupus familiaris (Dog) protein is Platelet-activating factor acetylhydrolase (PLA2G7).